Reading from the N-terminus, the 117-residue chain is Small ribosomal subunit protein uS17 (117 aa).

Residues 1 to 42 are disordered; that stretch reads MMAEAKKAAPKKAATAASKDADAKGPKHTPPNPKVRGRRKTR.

This sequence belongs to the universal ribosomal protein uS17 family. Part of the 30S ribosomal subunit.

In terms of biological role, one of the primary rRNA binding proteins, it binds specifically to the 5'-end of 16S ribosomal RNA. The sequence is that of Small ribosomal subunit protein uS17 from Mycolicibacterium paratuberculosis (strain ATCC BAA-968 / K-10) (Mycobacterium paratuberculosis).